The sequence spans 228 residues: Ribulose-phosphate 3-epimerase (228 aa).

S9 contacts substrate. Positions 34, 36, and 70 each coordinate a divalent metal cation. D36 (proton acceptor) is an active-site residue. Substrate-binding positions include H70, 146 to 149 (GKGG), 175 to 177 (DGG), and 197 to 198 (GT). A divalent metal cation is bound at residue D175. D175 functions as the Proton donor in the catalytic mechanism.

This sequence belongs to the ribulose-phosphate 3-epimerase family. Requires Co(2+) as cofactor. Fe(2+) serves as cofactor. It depends on Mn(2+) as a cofactor. Zn(2+) is required as a cofactor.

It carries out the reaction D-ribulose 5-phosphate = D-xylulose 5-phosphate. Its pathway is carbohydrate degradation; pentose phosphate pathway; D-xylulose 5-phosphate from D-ribulose 5-phosphate (non-oxidative stage): step 1/1. Catalyzes the reversible epimerization of D-ribulose 5-phosphate to D-xylulose 5-phosphate. The polypeptide is Ribulose-phosphate 3-epimerase (Schizosaccharomyces pombe (strain 972 / ATCC 24843) (Fission yeast)).